We begin with the raw amino-acid sequence, 359 residues long: Stearoyl-CoA desaturase (359 aa).

At Met1 to Val72 the chain is on the cytoplasmic side. Residues Trp73–Ile93 traverse the membrane as a helical segment. Asn75 provides a ligand contact to substrate. Residues Pro94–Lys97 lie on the Lumenal side of the membrane. A helical transmembrane segment spans residues Phe98 to Gly118. At Ala119 to Tyr217 the chain is on the cytoplasmic side. Fe cation is bound by residues His120 and His125. Positions His120–His125 match the Histidine box-1 motif. Substrate is bound by residues Asn148, Arg155, and Asp156. Fe cation-binding residues include His157, His160, and His161. The Histidine box-2 motif lies at His157–His161. Residues Arg188 and Lys189 each coordinate substrate. A phosphoserine mark is found at Ser198 and Ser203. Residues Tyr218–Phe237 form a helical membrane-spanning segment. Residues Trp238 to Thr241 are Lumenal-facing. Residues Phe242–Leu263 traverse the membrane as a helical segment. Residue Trp262 participates in substrate binding. The Cytoplasmic segment spans residues Val264–Gly359. 4 residues coordinate Fe cation: His269, His298, His301, and His302. Positions His298–His302 match the Histidine box-3 motif.

The protein belongs to the fatty acid desaturase type 1 family. May self-associate and form homodimers. Fe(2+) is required as a cofactor. Detected in fetal liver, lung and brain. Highly expressed in adult adipose tissue, and at lower levels in adult brain and lung.

The protein resides in the endoplasmic reticulum membrane. It carries out the reaction octadecanoyl-CoA + 2 Fe(II)-[cytochrome b5] + O2 + 2 H(+) = (9Z)-octadecenoyl-CoA + 2 Fe(III)-[cytochrome b5] + 2 H2O. The catalysed reaction is hexadecanoyl-CoA + 2 Fe(II)-[cytochrome b5] + O2 + 2 H(+) = (9Z)-hexadecenoyl-CoA + 2 Fe(III)-[cytochrome b5] + 2 H2O. Functionally, stearoyl-CoA desaturase that utilizes O(2) and electrons from reduced cytochrome b5 to introduce the first double bond into saturated fatty acyl-CoA substrates. Catalyzes the insertion of a cis double bond at the delta-9 position into fatty acyl-CoA substrates including palmitoyl-CoA and stearoyl-CoA. Gives rise to a mixture of 16:1 and 18:1 unsaturated fatty acids. Plays an important role in lipid biosynthesis. Plays an important role in regulating the expression of genes that are involved in lipogenesis and in regulating mitochondrial fatty acid oxidation. Plays an important role in body energy homeostasis. Contributes to the biosynthesis of membrane phospholipids, cholesterol esters and triglycerides. This chain is Stearoyl-CoA desaturase (SCD), found in Homo sapiens (Human).